Here is a 358-residue protein sequence, read N- to C-terminus: Valine dehydrogenase (358 aa).

The active site involves Lys-88. Residue 188–194 (GVGKVGH) coordinates NAD(+).

It belongs to the Glu/Leu/Phe/Val dehydrogenases family. Homodimer.

Its subcellular location is the cytoplasm. The catalysed reaction is L-valine + NAD(+) + H2O = 3-methyl-2-oxobutanoate + NH4(+) + NADH + H(+). It functions in the pathway amino-acid degradation; L-valine degradation. In terms of biological role, oxidative deamination of branched-chain amino acids. The catabolism of valine is the major source of fatty acid precursors for macrolide biosynthesis and a vital source of antibiotic precursors. The sequence is that of Valine dehydrogenase (vdh) from Streptomyces virginiae (Streptomyces cinnamonensis).